A 337-amino-acid chain; its full sequence is Glyceraldehyde-3-phosphate dehydrogenase 1, cytosolic (337 aa).

The segment at 1-151 (MGKIKIGING…YTSDVNIVSN (151 aa)) is binding to NAD. NAD(+) contacts are provided by residues 13-14 (RI), Asp35, and Arg82. Positions 152–337 (ASCTTNCLAP…DLIRHMFKTQ (186 aa)) are catalytic. D-glyceraldehyde 3-phosphate contacts are provided by residues 153 to 155 (SCT), Thr184, 213 to 214 (TG), and Arg236. Cys154 (nucleophile) is an active-site residue. Residue Asn318 coordinates NAD(+).

It belongs to the glyceraldehyde-3-phosphate dehydrogenase family. In terms of assembly, homotetramer.

Its subcellular location is the cytoplasm. The enzyme catalyses D-glyceraldehyde 3-phosphate + phosphate + NAD(+) = (2R)-3-phospho-glyceroyl phosphate + NADH + H(+). The protein operates within carbohydrate degradation; glycolysis; pyruvate from D-glyceraldehyde 3-phosphate: step 1/5. Key enzyme in glycolysis that catalyzes the first step of the pathway by converting D-glyceraldehyde 3-phosphate (G3P) into 3-phospho-D-glyceroyl phosphate. Essential for the maintenance of cellular ATP levels and carbohydrate metabolism. This is Glyceraldehyde-3-phosphate dehydrogenase 1, cytosolic (GAPC1) from Zea mays (Maize).